The chain runs to 325 residues: Small ribosomal subunit protein RACK1 (325 aa).

7 WD repeats span residues 13–44, 61–91, 103–133, 147–179, 191–221, 232–261, and 291–321; these read AHTDVVTAIATPIDNSDMIVTASRDKSIILWH, GHSHFVQDVVLSSDGQFALSGSWDGELRLWD, GHTKDVLSVAFSIDNRQIVSASRDRTIKLWN, AHSDWVSCVRFSPSTPQPTIVSASWDRTVKVWN, GHSGYVNTVAVSPDGSLCASGGKDGVILLWD, DAGSIIHALCFSPNRYWLCAATESSIKIWD, and KKVIYCTSLNWSADGSTLFSGYTDGVVRVWG.

The protein belongs to the WD repeat G protein beta family. Ribosomal protein RACK1 subfamily.

Its function is as follows. Plays a role in hormone-mediated cell division. This chain is Small ribosomal subunit protein RACK1 (GB1), found in Medicago sativa (Alfalfa).